The following is a 518-amino-acid chain: Chromosomal replication initiator protein DnaA (518 aa).

Positions 1–72 are domain I, interacts with DnaA modulators; the sequence is MNEFWQHCSA…DLARDFWHSP (72 aa). The interval 72–181 is domain II; it reads PVDVQFVLDP…GESDSTYERS (110 aa). A disordered region spans residues 155–178; sequence AAARRTWRPGAAAQAAGGESDSTY. A domain III, AAA+ region region spans residues 182 to 398; sequence KLNPVLTFDN…GALRKILAYS (217 aa). ATP-binding residues include Gly226, Gly228, Lys229, and Thr230. The segment at 399-518 is domain IV, binds dsDNA; the sequence is KFHGREITIE…LHVLEQTLKG (120 aa).

Belongs to the DnaA family. As to quaternary structure, oligomerizes as a right-handed, spiral filament on DNA at oriC.

The protein resides in the cytoplasm. In terms of biological role, plays an essential role in the initiation and regulation of chromosomal replication. ATP-DnaA binds to the origin of replication (oriC) to initiate formation of the DNA replication initiation complex once per cell cycle. Binds the DnaA box (a 9 base pair repeat at the origin) and separates the double-stranded (ds)DNA. Forms a right-handed helical filament on oriC DNA; dsDNA binds to the exterior of the filament while single-stranded (ss)DNA is stabiized in the filament's interior. The ATP-DnaA-oriC complex binds and stabilizes one strand of the AT-rich DNA unwinding element (DUE), permitting loading of DNA polymerase. After initiation quickly degrades to an ADP-DnaA complex that is not apt for DNA replication. Binds acidic phospholipids. The sequence is that of Chromosomal replication initiator protein DnaA from Paraburkholderia phymatum (strain DSM 17167 / CIP 108236 / LMG 21445 / STM815) (Burkholderia phymatum).